The following is a 194-amino-acid chain: Outer-membrane lipoprotein LolB (194 aa).

An N-terminal signal peptide occupies residues 1–18 (MTLFLRIFTFGCLLLLAG). The N-palmitoyl cysteine moiety is linked to residue cysteine 19. Cysteine 19 carries S-diacylglycerol cysteine lipidation.

The protein belongs to the LolB family. As to quaternary structure, monomer.

It localises to the cell outer membrane. Plays a critical role in the incorporation of lipoproteins in the outer membrane after they are released by the LolA protein. The sequence is that of Outer-membrane lipoprotein LolB from Aeromonas salmonicida (strain A449).